Here is a 331-residue protein sequence, read N- to C-terminus: Tetraacyldisaccharide 4'-kinase (331 aa).

Residue 59–66 coordinates ATP; sequence FVGGTGKT.

It belongs to the LpxK family.

The catalysed reaction is a lipid A disaccharide + ATP = a lipid IVA + ADP + H(+). Its pathway is glycolipid biosynthesis; lipid IV(A) biosynthesis; lipid IV(A) from (3R)-3-hydroxytetradecanoyl-[acyl-carrier-protein] and UDP-N-acetyl-alpha-D-glucosamine: step 6/6. In terms of biological role, transfers the gamma-phosphate of ATP to the 4'-position of a tetraacyldisaccharide 1-phosphate intermediate (termed DS-1-P) to form tetraacyldisaccharide 1,4'-bis-phosphate (lipid IVA). In Alkalilimnicola ehrlichii (strain ATCC BAA-1101 / DSM 17681 / MLHE-1), this protein is Tetraacyldisaccharide 4'-kinase.